The primary structure comprises 28 residues: M-poneritoxin-Dq4a (28 aa).

A28 carries the alanine amide modification.

As to expression, expressed by the venom gland.

It is found in the secreted. Its function is as follows. The synthetic peptide has weak antimicrobial activity against Gram-negative bacterium E.coli ATCC 10536. It does not show antimicrobial activity against the Gram-positive bacteria B.amyloliquefacies S499, L.monocytogenes 2231 and S.aureus ATCC 29213, against the Gram-negative bacteria P.putida BTP1 and P.aeruginosa PaO1, or against the fungi S.cerevisiae, R.mucilaginosa, C.cucumerinum, F.oxysporum and B.cinerea. The chain is M-poneritoxin-Dq4a from Dinoponera quadriceps (South American ant).